The primary structure comprises 148 residues: Glutamate mutase sigma subunit 2 (148 aa).

A B12-binding domain is found at 1–134 (MRTVILGVIG…EALKADLGHR (134 aa)). Adenosylcob(III)alamin contacts are provided by residues 11–15 (SDAHV), histidine 14, 59–61 (SSL), and 90–94 (NLAVG). A compositionally biased stretch (basic and acidic residues) spans 129 to 141 (ADLGHRSREEASS). The disordered stretch occupies residues 129 to 148 (ADLGHRSREEASSEKVQLGS).

Belongs to the methylaspartate mutase GlmS subunit family. In terms of assembly, heterotetramer composed of 2 epsilon subunits (GlmE) and 2 sigma subunits (GlmS). GlmE exists as a homodimer and GlmS as a monomer. Adenosylcob(III)alamin serves as cofactor.

The enzyme catalyses (2S,3S)-3-methyl-L-aspartate = L-glutamate. Its pathway is amino-acid degradation; L-glutamate degradation via mesaconate pathway; acetate and pyruvate from L-glutamate: step 1/4. Its function is as follows. Catalyzes the carbon skeleton rearrangement of L-glutamate to L-threo-3-methylaspartate ((2S,3S)-3-methylaspartate). The sequence is that of Glutamate mutase sigma subunit 2 from Haloarcula marismortui (strain ATCC 43049 / DSM 3752 / JCM 8966 / VKM B-1809) (Halobacterium marismortui).